The chain runs to 442 residues: MMNTDETIFALSTVFGKSGVAVIRISGNHALKALNHFHVNKDMKPRFATLVDLYDSSDQLIDNGIAIYFPAPNSFTGEDVIELQVHGGKAVIKIVLEELSRIFVMAKPGEFLLRAFLNGKFDLTQIEGIADLIDAETKMQAKQAIKQMSGELEKLYSSWRQRLIAVQSKIEAYIDFPEDVATEKNELEKINDEVQTLVQSIQEHLNDNRRGERLREGLHIVITGEPNVGKSTLFNFLARRDIAIVSEYVGTTRDILEAHIDIGGYPIILSDTAGIRESSDPVESEGISRAKKRSCEADLRIELFPFEQRYNINCNVISSNTIYVLSKADDVINDHDIKISDIDFLPVSILKGIGTEKLVSVIKEKVEEKFVYDRDVPVITRQRHRNCMQKAIEHLRRFNMNNPIELVSEDLRLAASELGVVTGIINVEEVLDDIFNNFCVGK.

3 residues coordinate (6S)-5-formyl-5,6,7,8-tetrahydrofolate: Arg-24, Glu-82, and Lys-120. The 151-residue stretch at 217–367 (GLHIVITGEP…LVSVIKEKVE (151 aa)) folds into the TrmE-type G domain. GTP contacts are provided by residues 227 to 232 (NVGKST), 246 to 252 (SEYVGTT), and 271 to 274 (DTAG). The Mg(2+) site is built by Ser-231 and Thr-252. A (6S)-5-formyl-5,6,7,8-tetrahydrofolate-binding site is contributed by Lys-442.

The protein belongs to the TRAFAC class TrmE-Era-EngA-EngB-Septin-like GTPase superfamily. TrmE GTPase family. In terms of assembly, homodimer. Heterotetramer of two MnmE and two MnmG subunits. Requires K(+) as cofactor.

The protein resides in the cytoplasm. In terms of biological role, exhibits a very high intrinsic GTPase hydrolysis rate. Involved in the addition of a carboxymethylaminomethyl (cmnm) group at the wobble position (U34) of certain tRNAs, forming tRNA-cmnm(5)s(2)U34. The sequence is that of tRNA modification GTPase MnmE from Wolbachia sp. subsp. Brugia malayi (strain TRS).